Consider the following 907-residue polypeptide: Protein translocase subunit SecA (907 aa).

ATP is bound by residues Gln87, 105–109 (GEGKT), and Asp513. The segment covering 841–853 (EAQRRAQAEEAAR) has biased composition (basic and acidic residues). The segment at 841-907 (EAQRRAQAEE…KYKQCHGQIN (67 aa)) is disordered. Residues 854–865 (RAQAQHASAQSQ) are compositionally biased toward low complexity. Residues 872–887 (EGHHQPVVRDERKVGR) show a composition bias toward basic and acidic residues. Residues Cys891, Cys893, Cys902, and His903 each coordinate Zn(2+).

The protein belongs to the SecA family. Monomer and homodimer. Part of the essential Sec protein translocation apparatus which comprises SecA, SecYEG and auxiliary proteins SecDF-YajC and YidC. Requires Zn(2+) as cofactor.

It localises to the cell inner membrane. The protein localises to the cytoplasm. It carries out the reaction ATP + H2O + cellular proteinSide 1 = ADP + phosphate + cellular proteinSide 2.. Functionally, part of the Sec protein translocase complex. Interacts with the SecYEG preprotein conducting channel. Has a central role in coupling the hydrolysis of ATP to the transfer of proteins into and across the cell membrane, serving both as a receptor for the preprotein-SecB complex and as an ATP-driven molecular motor driving the stepwise translocation of polypeptide chains across the membrane. The sequence is that of Protein translocase subunit SecA from Vibrio vulnificus (strain YJ016).